The sequence spans 77 residues: uncharacterized protein (77 aa).

Positions Lys53 to Asp77 are disordered.

This is an uncharacterized protein from Escherichia coli (strain K12).